The sequence spans 100 residues: NADH-quinone oxidoreductase subunit K (100 aa).

A run of 3 helical transmembrane segments spans residues 4–24, 28–48, and 60–80; these read LQHGLLLAAILFVLGLTGLVI, LLFMLISLEIMINASALAFVV, and VMYILAITLAAAEASIGLALL.

It belongs to the complex I subunit 4L family. As to quaternary structure, NDH-1 is composed of 13 different subunits. Subunits NuoA, H, J, K, L, M, N constitute the membrane sector of the complex.

It localises to the cell inner membrane. The catalysed reaction is a quinone + NADH + 5 H(+)(in) = a quinol + NAD(+) + 4 H(+)(out). NDH-1 shuttles electrons from NADH, via FMN and iron-sulfur (Fe-S) centers, to quinones in the respiratory chain. The immediate electron acceptor for the enzyme in this species is believed to be ubiquinone. Couples the redox reaction to proton translocation (for every two electrons transferred, four hydrogen ions are translocated across the cytoplasmic membrane), and thus conserves the redox energy in a proton gradient. The polypeptide is NADH-quinone oxidoreductase subunit K (Musicola paradisiaca (strain Ech703) (Dickeya paradisiaca)).